The following is a 151-amino-acid chain: Large ribosomal subunit protein bL17 (151 aa).

Belongs to the bacterial ribosomal protein bL17 family. In terms of assembly, part of the 50S ribosomal subunit. Contacts protein L32.

This chain is Large ribosomal subunit protein bL17, found in Chlorobium limicola (strain DSM 245 / NBRC 103803 / 6330).